The following is a 64-amino-acid chain: Large ribosomal subunit protein bL35 (64 aa).

Belongs to the bacterial ribosomal protein bL35 family.

The chain is Large ribosomal subunit protein bL35 from Pseudomonas savastanoi pv. phaseolicola (strain 1448A / Race 6) (Pseudomonas syringae pv. phaseolicola (strain 1448A / Race 6)).